Reading from the N-terminus, the 107-residue chain is MARATLSAAPSNPRLLRVALLLLLLVAASRRAAGAPLATELRCQCLQTLQGIHLKNIQSVKVKSPGPHCAQTEVIATLKNGQKACLNPASPMVKKIIEKMLKNGKSN.

Residues 1-34 (MARATLSAAPSNPRLLRVALLLLLLVAASRRAAG) form the signal peptide. 2 disulfides stabilise this stretch: C43–C69 and C45–C85.

Belongs to the intercrine alpha (chemokine CxC) family. Post-translationally, the N-terminal processed form GRO-beta(5-73) is produced by proteolytic cleavage after secretion from bone marrow stromal cells.

The protein localises to the secreted. Its function is as follows. Produced by activated monocytes and neutrophils and expressed at sites of inflammation. Hematoregulatory chemokine, which, in vitro, suppresses hematopoietic progenitor cell proliferation. GRO-beta(5-73) shows a highly enhanced hematopoietic activity. This is C-X-C motif chemokine 2 (CXCL2) from Homo sapiens (Human).